Reading from the N-terminus, the 383-residue chain is Acetylornithine deacetylase (383 aa).

Zn(2+) is bound at residue His80. Asp82 is a catalytic residue. Residue Asp112 coordinates Zn(2+). Glu144 is a catalytic residue. 3 residues coordinate Zn(2+): Glu145, Glu169, and His355.

Belongs to the peptidase M20A family. ArgE subfamily. As to quaternary structure, homodimer. The cofactor is Zn(2+). Requires Co(2+) as cofactor. It depends on glutathione as a cofactor.

It localises to the cytoplasm. It catalyses the reaction N(2)-acetyl-L-ornithine + H2O = L-ornithine + acetate. The protein operates within amino-acid biosynthesis; L-arginine biosynthesis; L-ornithine from N(2)-acetyl-L-ornithine (linear): step 1/1. Functionally, catalyzes the hydrolysis of the amide bond of N(2)-acetylated L-amino acids. Cleaves the acetyl group from N-acetyl-L-ornithine to form L-ornithine, an intermediate in L-arginine biosynthesis pathway, and a branchpoint in the synthesis of polyamines. The chain is Acetylornithine deacetylase from Salmonella agona (strain SL483).